Here is a 481-residue protein sequence, read N- to C-terminus: Zinc metalloproteinase/disintegrin (481 aa).

An N-terminal signal peptide occupies residues 1–20 (MIQVLLVTICLAVFPYQGSS). Residues 21–190 (IILESGNVDD…KASQLYLTPE (170 aa)) constitute a propeptide that is removed on maturation. Residues 197–392 (RHIELAIVVD…KKPQCILNAP (196 aa)) form the Peptidase M12B domain. Residues Glu-200 and Asp-284 each contribute to the Ca(2+) site. Intrachain disulfides connect Cys-308/Cys-387, Cys-349/Cys-371, and Cys-351/Cys-354. His-333 is a binding site for Zn(2+). Glu-334 is a catalytic residue. 2 residues coordinate Zn(2+): His-337 and His-343. Ca(2+)-binding residues include Cys-387 and Asn-390. Residues 393-410 (LRTDTVSTPISGNEFLEA) constitute a propeptide that is removed on maturation. The 82-residue stretch at 400-481 (TPISGNEFLE…ADCPRNGLYG (82 aa)) folds into the Disintegrin domain. 6 disulfides stabilise this stretch: Cys-414/Cys-429, Cys-416/Cys-424, Cys-423/Cys-446, Cys-437/Cys-443, Cys-442/Cys-467, and Cys-455/Cys-474. Positions 459–461 (RGD) match the Cell attachment site motif.

Belongs to the venom metalloproteinase (M12B) family. P-II subfamily. P-IIa sub-subfamily. In terms of assembly, monomer. Zn(2+) is required as a cofactor. In terms of tissue distribution, expressed by the venom gland.

Its subcellular location is the secreted. Functionally, impairs hemostasis in the envenomed animal. In terms of biological role, inhibits platelet aggregation induced by ADP and collagen. Acts by inhibiting fibrinogen interaction with platelet receptors GPIIb/GPIIIa (ITGA2B/ITGB3). Has antitumor-growth activity. In Protobothrops jerdonii (Jerdon's pitviper), this protein is Zinc metalloproteinase/disintegrin.